The primary structure comprises 433 residues: N-lysine methyltransferase SMYD2 (433 aa).

An SET domain is found at 7–241 (GGLERFCSPG…PGEEVFTSYI (235 aa)). Residue 17-19 (KGR) coordinates S-adenosyl-L-methionine. Zn(2+)-binding residues include Cys52, Cys55, Cys65, Cys68, Cys74, Cys78, His86, and Cys90. The MYND-type zinc finger occupies 52 to 90 (CEFCFARKEGLSKCGRCKQAFYCNVECQKEDWPMHKLEC). Residues His137, 206 to 207 (NH), and 258 to 260 (YFF) contribute to the S-adenosyl-L-methionine site.

The protein belongs to the class V-like SAM-binding methyltransferase superfamily. As to quaternary structure, interacts with RNA polymerase II and HELZ. Interacts with SIN3A and HDAC1. Interacts (via MYND-type zinc finger) with EPB41L3. Interacts (via SET domain) with p53/TP53. Interacts with RB1 and HSP90AA1.

It localises to the cytoplasm. The protein resides in the cytosol. It is found in the nucleus. It catalyses the reaction L-lysyl(4)-[histone H3] + 3 S-adenosyl-L-methionine = N(6),N(6),N(6)-trimethyl-L-lysyl(4)-[histone H3] + 3 S-adenosyl-L-homocysteine + 3 H(+). The enzyme catalyses L-lysyl-[protein] + S-adenosyl-L-methionine = N(6)-methyl-L-lysyl-[protein] + S-adenosyl-L-homocysteine + H(+). In terms of biological role, protein-lysine N-methyltransferase that methylates both histones and non-histone proteins, including p53/TP53 and RB1. Specifically trimethylates histone H3 'Lys-4' (H3K4me3) in vivo. The activity requires interaction with HSP90alpha. Shows even higher methyltransferase activity on p53/TP53. Monomethylates 'Lys-370' of p53/TP53, leading to decreased DNA-binding activity and subsequent transcriptional regulation activity of p53/TP53. Monomethylates RB1 at 'Lys-860'. This Sus scrofa (Pig) protein is N-lysine methyltransferase SMYD2 (SMYD2).